Consider the following 394-residue polypeptide: NAC domain-containing protein 3 (394 aa).

The NAC domain maps to 3–147 (TPVGLRFCPT…TYTLCKVMFN (145 aa)). The DNA-binding element occupies 104-153 (IGEKKILMFYTSKESKSDWVIHEYHGFSHNQMMMTYTLCKVMFNGGMREK). Disordered stretches follow at residues 152 to 173 (EKSSSSPSSSGVSGIEQSRRDS) and 264 to 300 (NSLTGVFSDDVSSDDNDSDLLTPKTNSIQTSSTCDSF). The span at 155-165 (SSSPSSSGVSG) shows a compositional bias: low complexity. The segment covering 286–300 (PKTNSIQTSSTCDSF) has biased composition (polar residues).

The protein localises to the nucleus. In Arabidopsis thaliana (Mouse-ear cress), this protein is NAC domain-containing protein 3 (NAC003).